The sequence spans 130 residues: Small ribosomal subunit protein uS8 (130 aa).

Belongs to the universal ribosomal protein uS8 family. As to quaternary structure, part of the 30S ribosomal subunit.

One of the primary rRNA binding proteins, it binds directly to 16S rRNA central domain where it helps coordinate assembly of the platform of the 30S subunit. In Pyrococcus horikoshii (strain ATCC 700860 / DSM 12428 / JCM 9974 / NBRC 100139 / OT-3), this protein is Small ribosomal subunit protein uS8.